The primary structure comprises 88 residues: Large ribosomal subunit protein bL27 (88 aa).

Residues 1-24 (MATKKSGGSSGNGRDSRGRRLGVK) are disordered.

It belongs to the bacterial ribosomal protein bL27 family.

This chain is Large ribosomal subunit protein bL27, found in Ehrlichia canis (strain Jake).